Here is a 231-residue protein sequence, read N- to C-terminus: Ribose-5-phosphate isomerase A (231 aa).

Substrate is bound by residues 31–34, 87–90, and 100–103; these read SGST, DGAD, and KGGG. Residue Glu-109 is the Proton acceptor of the active site. Lys-127 is a substrate binding site.

Belongs to the ribose 5-phosphate isomerase family. Homodimer.

The enzyme catalyses aldehydo-D-ribose 5-phosphate = D-ribulose 5-phosphate. The protein operates within carbohydrate degradation; pentose phosphate pathway; D-ribose 5-phosphate from D-ribulose 5-phosphate (non-oxidative stage): step 1/1. In terms of biological role, catalyzes the reversible conversion of ribose-5-phosphate to ribulose 5-phosphate. The chain is Ribose-5-phosphate isomerase A from Chlamydia pneumoniae (Chlamydophila pneumoniae).